A 432-amino-acid polypeptide reads, in one-letter code: MIKKLSIQPASGLQGDLSVPGDKSVSHRGLILGAISQGTTTLHHFLPAADCLSTLTALQKLGVPIKRVDTTVTISGRGLRGLTQPQQPLDMGNAGTATRLLTGLLAGQPFETTLVGDTSLSQRPMERVRQPLQAMGAQVQLTAGHLPMTITGRTLHGSRTEMQVASAQVKSALILAALQADQASTIIEKLPTRDHTERLLQQFGGQIETAPDQRTITVQPQPALVGQSLTIPGDFSSAAFFVTAATIIPNSHVRLTNVGLNPTRTGFLNILRRMGGQVTVDHEHRMGEPVGTLDVRFAQLHPVQVTATEIPAVIDELPLVALLAATANGISTISGAAELRVKETDRIATIVTELQKLGVRITSQPDGFVIDGRKSWRQPTEPLASHGDHRIGMMMAIAALRLAAPAELESAEAVNISYPTFFEDLARLSQGV.

3-phosphoshikimate-binding residues include Lys23, Ser24, and Arg28. Lys23 provides a ligand contact to phosphoenolpyruvate. Gly95 and Arg123 together coordinate phosphoenolpyruvate. Ser166, Gln168, Asp315, and Lys342 together coordinate 3-phosphoshikimate. Gln168 lines the phosphoenolpyruvate pocket. Catalysis depends on Asp315, which acts as the Proton acceptor. Arg346 and Arg390 together coordinate phosphoenolpyruvate.

The protein belongs to the EPSP synthase family. As to quaternary structure, monomer.

It is found in the cytoplasm. The enzyme catalyses 3-phosphoshikimate + phosphoenolpyruvate = 5-O-(1-carboxyvinyl)-3-phosphoshikimate + phosphate. It participates in metabolic intermediate biosynthesis; chorismate biosynthesis; chorismate from D-erythrose 4-phosphate and phosphoenolpyruvate: step 6/7. Its function is as follows. Catalyzes the transfer of the enolpyruvyl moiety of phosphoenolpyruvate (PEP) to the 5-hydroxyl of shikimate-3-phosphate (S3P) to produce enolpyruvyl shikimate-3-phosphate and inorganic phosphate. This Lactiplantibacillus plantarum (strain ATCC BAA-793 / NCIMB 8826 / WCFS1) (Lactobacillus plantarum) protein is 3-phosphoshikimate 1-carboxyvinyltransferase.